Reading from the N-terminus, the 776-residue chain is Reticulon-1 (776 aa).

4 disordered regions span residues 1–103 (MAAP…GEGS), 136–168 (ISESPEELGTPGSSLPDVPGIESRGLFSSDSGI), 204–244 (EVKH…EPAP), and 285–580 (LTEI…APPP). Residues 204–240 (EVKHQEQNHPELEDKDLDFKNKDTDISIKPEGVREPD) show a composition bias toward basic and acidic residues. At serine 327 the chain carries Phosphoserine. Residues 328–341 (PGSITPPSSGTEPS) show a composition bias toward low complexity. Phosphoserine occurs at positions 350, 352, and 487. The span at 497 to 511 (AIREETGVRAEERAP) shows a compositional bias: basic and acidic residues. A Reticulon domain is found at 589–776 (AIDLLYWRDI…KIPGAKRHAE (188 aa)). A run of 2 helical transmembrane segments spans residues 603-623 (IVFGSFLLLLFSLTQFSVVSV) and 705-725 (FAVLMWLLTYVGALFNGLTLL).

In terms of assembly, interacts with NDRG1. Interacts with BACE1. Interacts with TMEM33. Post-translationally, phosphorylated.

The protein resides in the endoplasmic reticulum membrane. It localises to the golgi apparatus membrane. In terms of biological role, inhibits amyloid precursor protein processing, probably by blocking BACE1 activity. In Pan troglodytes (Chimpanzee), this protein is Reticulon-1 (RTN1).